Reading from the N-terminus, the 346-residue chain is GTPase Obg (346 aa).

The Obg domain occupies 1 to 158; the sequence is MFIDKAKIYV…RWIELELKLL (158 aa). One can recognise an OBG-type G domain in the interval 159–330; it reads ADVGIIGFPN…LINLIRETRD (172 aa). GTP-binding positions include 165–172, 190–194, 212–215, 282–285, and 311–313; these read GFPNAGKS, FTTLT, DIPG, NKID, and SLI. Positions 172 and 192 each coordinate Mg(2+).

This sequence belongs to the TRAFAC class OBG-HflX-like GTPase superfamily. OBG GTPase family. As to quaternary structure, monomer. Mg(2+) serves as cofactor.

The protein localises to the cytoplasm. In terms of biological role, an essential GTPase which binds GTP, GDP and possibly (p)ppGpp with moderate affinity, with high nucleotide exchange rates and a fairly low GTP hydrolysis rate. Plays a role in control of the cell cycle, stress response, ribosome biogenesis and in those bacteria that undergo differentiation, in morphogenesis control. The chain is GTPase Obg from Sulfurihydrogenibium sp. (strain YO3AOP1).